The sequence spans 541 residues: Chaperonin GroEL 2 (541 aa).

ATP is bound by residues 29 to 32 (TLGP) and 86 to 90 (DGTTT). Lys-132 participates in a covalent cross-link: Isoglutamyl lysine isopeptide (Lys-Gln) (interchain with Q-Cter in protein Pup). ATP is bound by residues Gly-413, 476–478 (NAA), and Asp-492.

It belongs to the chaperonin (HSP60) family. As to quaternary structure, forms a cylinder of 14 subunits composed of two heptameric rings stacked back-to-back. Interacts with the co-chaperonin GroES.

Its subcellular location is the secreted. It localises to the capsule. It is found in the cell surface. The protein localises to the cell wall. The catalysed reaction is ATP + H2O + a folded polypeptide = ADP + phosphate + an unfolded polypeptide.. Functionally, together with its co-chaperonin GroES, plays an essential role in assisting protein folding. The GroEL-GroES system forms a nano-cage that allows encapsulation of the non-native substrate proteins and provides a physical environment optimized to promote and accelerate protein folding. The protein is Chaperonin GroEL 2 of Mycolicibacterium smegmatis (strain ATCC 700084 / mc(2)155) (Mycobacterium smegmatis).